Reading from the N-terminus, the 373-residue chain is MTSQRSLPADDFGIYYVLAECTDYYDTLPVKEADGSQPCSQGVTGLRNLGNTCYMNAILQCLCSISPLVEYFLSGKYITALQNDCSEVATAFAYLMTDMWLGDSDCVSPEIFRSALGNLYPAFTKKTQQDAQEFLIYVLNELHEALKKYHYPRRRSHEKGSAQRCCRKWITTETSVITQLFEGQLNYSIVCLKCEKCTYKNEVFTVLSLPIPSEYECSLQDCLQCFFQQDTLTWNNQIHCSFCETKQETAVRAGISKAPKIIIFHLKRFDIQGTTKRKLRTDIHYPLTNLDLTPYICPIFRKYPKYNLCAVVNHFGDLDGGHYTAFCKNSFTQAWYSFDDTRVSEIPDTSVQNATAYLLFYSCQPFSIPIQKH.

In terms of domain architecture, USP spans Thr-44 to Gln-364. Cys-53 functions as the Nucleophile in the catalytic mechanism. The active-site Proton acceptor is His-322.

The protein belongs to the peptidase C19 family.

Its subcellular location is the cytoplasm. It localises to the cytoskeleton. The protein resides in the microtubule organizing center. It is found in the centrosome. The protein localises to the nucleus. The enzyme catalyses Thiol-dependent hydrolysis of ester, thioester, amide, peptide and isopeptide bonds formed by the C-terminal Gly of ubiquitin (a 76-residue protein attached to proteins as an intracellular targeting signal).. Deubiquitinating enzyme that removes conjugated ubiquitin from specific proteins to regulate different cellular processes. Regulates the inflammasome signaling pathway by deubiquitinating 'Lys-63'-linked polyubiquitination of the PYCARD/ASC adapter protein. Regulates the ubiquitination and stability of the ACE2 protein. Acts as a negative regulator of the G2/M checkpoint pathway, by preventing serine/threonine kinase WEE1 degradation, thereby repressing entry into mitosis following activation of the G2/M DNA damage checkpoint. This Macaca fascicularis (Crab-eating macaque) protein is Ubiquitin carboxyl-terminal hydrolase 50 (USP50).